The primary structure comprises 641 residues: Sodium-dependent nutrient amino acid transporter 1 (641 aa).

The tract at residues Met1 to Arg38 is disordered. Residues Met1 to Asn40 lie on the Cytoplasmic side of the membrane. The segment covering Ser9–Thr26 has biased composition (low complexity). The span at Glu27–Ala36 shows a compositional bias: basic and acidic residues. The next 3 membrane-spanning stretches (helical) occupy residues Trp41–Val61, Gly74–Leu94, and Ser111–Ile131. N-linked (GlcNAc...) asparagine glycans are attached at residues Asn185 and Asn190. The next 9 helical transmembrane spans lie at Pro229–Met249, Ala258–Val278, Ala307–Ser327, Ile341–Leu361, Leu401–Leu421, Val447–Leu467, Thr474–Leu494, Cys516–Ile536, and Ile552–Tyr572.

Belongs to the sodium:neurotransmitter symporter (SNF) (TC 2.A.22) family. In larvae, weak specific expression in the anterior midgut just proximal to the gastric caeca reproductive rudiments, common ureters of the Malpighian tubules, and distal swollen portion of the anterior pair of Malpighian tubules. Expression is also seen in the imaginal disks of the head; brain hemispheres and the ventral ganglion. Stronger expression in the posterior midgut.

Its subcellular location is the membrane. Unusual broad substrate spectrum amino acid:sodium cotransporter that promotes absorption of the D isomers of essential amino acids. Neutral amino acids are the preferred substrates, especially methionine and phenylalanine. This is Sodium-dependent nutrient amino acid transporter 1 (NAAT1) from Drosophila melanogaster (Fruit fly).